Here is a 141-residue protein sequence, read N- to C-terminus: Large ribosomal subunit protein uL16 (141 aa).

Residues 1–16 (MLMPRKPPKGFRKPHH) show a composition bias toward basic residues. A disordered region spans residues 1 to 27 (MLMPRKPPKGFRKPHHPDRSGASKGGN).

This sequence belongs to the universal ribosomal protein uL16 family. Part of the 50S ribosomal subunit.

Functionally, binds 23S rRNA and is also seen to make contacts with the A and possibly P site tRNAs. This Salinispora arenicola (strain CNS-205) protein is Large ribosomal subunit protein uL16.